The sequence spans 880 residues: Valine--tRNA ligase (880 aa).

The 'HIGH' region motif lies at 49-59 (PNVTGKLHLGH). The 'KMSKS' region motif lies at 525–529 (KMSKS). K528 contacts ATP. Positions 809–880 (LEGLINIEEE…VKARLAELKR (72 aa)) form a coiled coil.

It belongs to the class-I aminoacyl-tRNA synthetase family. ValS type 1 subfamily. In terms of assembly, monomer.

The protein localises to the cytoplasm. The enzyme catalyses tRNA(Val) + L-valine + ATP = L-valyl-tRNA(Val) + AMP + diphosphate. Catalyzes the attachment of valine to tRNA(Val). As ValRS can inadvertently accommodate and process structurally similar amino acids such as threonine, to avoid such errors, it has a 'posttransfer' editing activity that hydrolyzes mischarged Thr-tRNA(Val) in a tRNA-dependent manner. This Geobacillus kaustophilus (strain HTA426) protein is Valine--tRNA ligase.